The primary structure comprises 559 residues: Glypican-1 (559 aa).

The first 23 residues, 1-23, serve as a signal peptide directing secretion; it reads MELRARGWWLLYAAAVLVACARG. Disulfide bonds link C32–C68, C62–C256, C69–C259, C191–C343, C246–C279, C268–C415, and C272–C401. N-linked (GlcNAc...) asparagine glycans are attached at residues N79 and N116. The tract at residues 478–539 is disordered; sequence FQDASDDGSG…SAAAPTPPQA (62 aa). Residues S486, S488, and S490 are each glycosylated (O-linked (Xyl...) (heparan sulfate) serine). S530 carries the GPI-anchor amidated serine lipid modification. Residues 531–559 constitute a propeptide, removed in mature form; it reads AAAPTPPQASPLLLLGLALALPAVAPRGR.

This sequence belongs to the glypican family. Post-translationally, S-nitrosylated in a Cu(2+)-dependent manner. Nitric acid (NO) is released from the nitrosylated cysteines by ascorbate or by some other reducing agent, in a Cu(2+) or Zn(2+) dependent manner. This free nitric oxide is then capable of cleaving the heparan sulfate side chains. In terms of processing, N- and O-glycosylated. N-glycosylation is mainly of the complex type containing sialic acid. O-glycosylated with heparan sulfate. The heparan sulfate chains can be cleaved either by the action of heparanase or, degraded by a deaminative process that uses nitric oxide (NO) released from the S-nitrosylated cysteines. This process is triggered by ascorbate, or by some other reducing agent, in a Cu(2+)- or Zn(2+) dependent manner. Cu(2+) ions are provided by ceruloproteins such as APP, PRNP or CP which associate with GCP1 in intracellular compartments or lipid rafts. Shed from the cell surface probably by further cleavage.

The protein localises to the cell membrane. The protein resides in the endosome. It is found in the secreted. Its subcellular location is the extracellular space. Functionally, cell surface proteoglycan that bears heparan sulfate. Binds, via the heparan sulfate side chains, alpha-4 (V) collagen and participates in Schwann cell myelination. May act as a catalyst in increasing the rate of conversion of prion protein PRPN (C) to PRNP (Sc) via associating (via the heparan sulfate side chains) with both forms of PRPN, targeting them to lipid rafts and facilitating their interaction. Required for proper skeletal muscle differentiation by sequestering FGF2 in lipid rafts preventing its binding to receptors (FGFRs) and inhibiting the FGF-mediated signaling. The chain is Glypican-1 (GPC1) from Bos taurus (Bovine).